Consider the following 131-residue polypeptide: UPF0134 protein MPN_010 (131 aa).

The protein belongs to the UPF0134 family.

The sequence is that of UPF0134 protein MPN_010 from Mycoplasma pneumoniae (strain ATCC 29342 / M129 / Subtype 1) (Mycoplasmoides pneumoniae).